Reading from the N-terminus, the 357-residue chain is Membrane-bound lytic murein transglycosylase C (357 aa).

The signal sequence occupies residues 1–16 (MKKLLALFVIAPILIS). The N-palmitoyl cysteine moiety is linked to residue Cys17. A lipid anchor (S-diacylglycerol cysteine) is attached at Cys17.

Belongs to the transglycosylase Slt family.

The protein resides in the cell outer membrane. It carries out the reaction Exolytic cleavage of the (1-&gt;4)-beta-glycosidic linkage between N-acetylmuramic acid (MurNAc) and N-acetylglucosamine (GlcNAc) residues in peptidoglycan, from either the reducing or the non-reducing ends of the peptidoglycan chains, with concomitant formation of a 1,6-anhydrobond in the MurNAc residue.. Its function is as follows. Murein-degrading enzyme. May play a role in recycling of muropeptides during cell elongation and/or cell division. The chain is Membrane-bound lytic murein transglycosylase C from Photorhabdus laumondii subsp. laumondii (strain DSM 15139 / CIP 105565 / TT01) (Photorhabdus luminescens subsp. laumondii).